A 164-amino-acid polypeptide reads, in one-letter code: Nucleotide-binding protein Acid345_2028 (164 aa).

It belongs to the YajQ family.

Its function is as follows. Nucleotide-binding protein. This chain is Nucleotide-binding protein Acid345_2028, found in Koribacter versatilis (strain Ellin345).